A 491-amino-acid polypeptide reads, in one-letter code: Glucose-6-phosphate 1-dehydrogenase (491 aa).

R51 and K150 together coordinate NADP(+). 4 residues coordinate substrate: H180, K184, E218, and D237. Catalysis depends on H242, which acts as the Proton acceptor. A substrate-binding site is contributed by K341.

This sequence belongs to the glucose-6-phosphate dehydrogenase family.

It carries out the reaction D-glucose 6-phosphate + NADP(+) = 6-phospho-D-glucono-1,5-lactone + NADPH + H(+). Its pathway is carbohydrate degradation; pentose phosphate pathway; D-ribulose 5-phosphate from D-glucose 6-phosphate (oxidative stage): step 1/3. Functionally, catalyzes the oxidation of glucose 6-phosphate to 6-phosphogluconolactone. In Rhizobium meliloti (strain 1021) (Ensifer meliloti), this protein is Glucose-6-phosphate 1-dehydrogenase.